A 209-amino-acid chain; its full sequence is Ribonuclease HII (209 aa).

An RNase H type-2 domain is found at 18-209; the sequence is SLVAGVDEVG…FKPVKALLER (192 aa). Positions 24, 25, and 116 each coordinate a divalent metal cation.

The protein belongs to the RNase HII family. Requires Mn(2+) as cofactor. The cofactor is Mg(2+).

The protein localises to the cytoplasm. The catalysed reaction is Endonucleolytic cleavage to 5'-phosphomonoester.. In terms of biological role, endonuclease that specifically degrades the RNA of RNA-DNA hybrids. The protein is Ribonuclease HII of Shewanella oneidensis (strain ATCC 700550 / JCM 31522 / CIP 106686 / LMG 19005 / NCIMB 14063 / MR-1).